The sequence spans 251 residues: Imidazole glycerol phosphate synthase subunit HisF (251 aa).

Catalysis depends on residues Asp11 and Asp130.

The protein belongs to the HisA/HisF family. Heterodimer of HisH and HisF.

The protein resides in the cytoplasm. It carries out the reaction 5-[(5-phospho-1-deoxy-D-ribulos-1-ylimino)methylamino]-1-(5-phospho-beta-D-ribosyl)imidazole-4-carboxamide + L-glutamine = D-erythro-1-(imidazol-4-yl)glycerol 3-phosphate + 5-amino-1-(5-phospho-beta-D-ribosyl)imidazole-4-carboxamide + L-glutamate + H(+). Its pathway is amino-acid biosynthesis; L-histidine biosynthesis; L-histidine from 5-phospho-alpha-D-ribose 1-diphosphate: step 5/9. Its function is as follows. IGPS catalyzes the conversion of PRFAR and glutamine to IGP, AICAR and glutamate. The HisF subunit catalyzes the cyclization activity that produces IGP and AICAR from PRFAR using the ammonia provided by the HisH subunit. This chain is Imidazole glycerol phosphate synthase subunit HisF, found in Flavobacterium johnsoniae (strain ATCC 17061 / DSM 2064 / JCM 8514 / BCRC 14874 / CCUG 350202 / NBRC 14942 / NCIMB 11054 / UW101) (Cytophaga johnsonae).